A 430-amino-acid polypeptide reads, in one-letter code: Flavin-dependent monooxygenase eupH (430 aa).

Residues 11 to 14, 33 to 34, glutamine 43, arginine 107, tyrosine 282, and aspartate 306 each bind FAD; these read AGIG and ER.

The protein belongs to the aromatic-ring hydroxylase family. Requires FAD as cofactor.

It participates in secondary metabolite biosynthesis; terpenoid biosynthesis. Flavin-dependent monooxygenase; part of the gene cluster that mediates the biosynthesis of eupenifeldin, a bistropolone meroterpenoid that acts as an antitumor agent. The first step of eupenifeldin biosynthesis is the biosynthesis of 3-methylorcinaldehyde performed by the non-reducing polyketide synthase eupA. Oxidative dearomatization of 3-methylorcinaldehyde likely catalyzed by the FAD-dependent monooxygenase eupB is followed by oxidative ring expansion by the 2-oxoglutarate-dependent dioxygenase eupC to provide the first tropolone metabolite, tropolone stipitaldehyde. In parallel, generation of sesquiterpene alpha-humulene from farnesylpyrophosphate (FPP) is catalyzed by the terpene cyclase eupE. The cytochrome P450 monooxygenase eupD then hydroxylates humulene to humulenol. The putative Diels-Alderase eupF probably catalyzes the formation of the tropolone-humulene skeleton by linking humulenol and the polyketide moiety. The short-chain dehydrogenase/reductase eupG and the flavin-dependent monooxygenase eupH are also essential for eupenifeldin biosynthesis and are likely the additional decorating enzymes of the tropolone-humulene skeleton to produce final eupenifeldin or derivatives. This is Flavin-dependent monooxygenase eupH from Phoma sp.